The primary structure comprises 171 residues: UPF0098 protein aq_1250 (171 aa).

The protein belongs to the UPF0098 family.

In Aquifex aeolicus (strain VF5), this protein is UPF0098 protein aq_1250.